Reading from the N-terminus, the 154-residue chain is uncharacterized protein (154 aa).

4 consecutive transmembrane segments (helical) span residues 15–37 (DFSFIINSYATNAIFLAAYALIT), 58–80 (FAAMLAGGLVSWGIVSMPYWLWG), 95–116 (LGALDAIVGGIILGYSASFAFT), and 123–145 (LVISWMLANSISTLVVAIFFVPH).

Its subcellular location is the cell membrane. This is an uncharacterized protein from Archaeoglobus fulgidus (strain ATCC 49558 / DSM 4304 / JCM 9628 / NBRC 100126 / VC-16).